Here is a 199-residue protein sequence, read N- to C-terminus: VAMP-like protein YKT61 (199 aa).

Positions 7 to 133 (LVLKCAPEAS…LTEALNKFQD (127 aa)) constitute a Longin domain. A v-SNARE coiled-coil homology domain is found at 139 to 199 (KLLKIQRELD…KKTNSCCTIL (61 aa)). Residue Cys195 is the site of S-palmitoyl cysteine attachment. A Cysteine methyl ester modification is found at Cys196. Residue Cys196 is the site of S-geranylgeranyl cysteine attachment. A propeptide spans 197–199 (TIL) (removed in mature form).

Belongs to the synaptobrevin family. Interacts with SYP41. Core constituent of the SNARE complex required for membrane fusion at the trans-Golgi network. In terms of tissue distribution, expressed ubiquitously in roots, stems, flowers and leaves.

It localises to the cell membrane. Its function is as follows. May be involved in the secretory pathway. Essential for membrane fusion mediated by either SYP41 or SYP61; triggers the fusion of phospholipid vesicles containing SYP41 or SYP61 and VTI12. The protein is VAMP-like protein YKT61 of Arabidopsis thaliana (Mouse-ear cress).